The chain runs to 144 residues: 3-hydroxyacyl-[acyl-carrier-protein] dehydratase FabZ (144 aa).

Residue His51 is part of the active site.

It belongs to the thioester dehydratase family. FabZ subfamily.

It is found in the cytoplasm. The catalysed reaction is a (3R)-hydroxyacyl-[ACP] = a (2E)-enoyl-[ACP] + H2O. Its function is as follows. Involved in unsaturated fatty acids biosynthesis. Catalyzes the dehydration of short chain beta-hydroxyacyl-ACPs and long chain saturated and unsaturated beta-hydroxyacyl-ACPs. The polypeptide is 3-hydroxyacyl-[acyl-carrier-protein] dehydratase FabZ (Clostridium botulinum (strain ATCC 19397 / Type A)).